We begin with the raw amino-acid sequence, 819 residues long: Lon protease (819 aa).

A compositionally biased stretch (polar residues) spans 1 to 14 (MNSTNNTDSQNLDP). Residues 1–40 (MNSTNNTDSQNLDPNASEVEKLLDESAEAEEKVDDHTPPS) are disordered. Residues 18–38 (EVEKLLDESAEAEEKVDDHTP) are compositionally biased toward basic and acidic residues. The region spanning 42–239 (LFILPLNKRP…KALVLLKKEL (198 aa)) is the Lon N-terminal domain. 392-399 (GPPGVGKT) provides a ligand contact to ATP. One can recognise a Lon proteolytic domain in the interval 634–818 (KTPVGVATGL…DDVFKIAFPG (185 aa)). Active-site residues include S724 and K767.

The protein belongs to the peptidase S16 family. As to quaternary structure, homohexamer. Organized in a ring with a central cavity.

The protein resides in the cytoplasm. It catalyses the reaction Hydrolysis of proteins in presence of ATP.. In terms of biological role, ATP-dependent serine protease that mediates the selective degradation of mutant and abnormal proteins as well as certain short-lived regulatory proteins. Required for cellular homeostasis and for survival from DNA damage and developmental changes induced by stress. Degrades polypeptides processively to yield small peptide fragments that are 5 to 10 amino acids long. Binds to DNA in a double-stranded, site-specific manner. In Chlamydia trachomatis serovar D (strain ATCC VR-885 / DSM 19411 / UW-3/Cx), this protein is Lon protease.